The chain runs to 577 residues: Aspartate--tRNA(Asp) ligase (577 aa).

Residue Glu172 participates in L-aspartate binding. The interval 196–199 (QLFK) is aspartate. Arg218 contacts L-aspartate. ATP contacts are provided by residues 218-220 (RDE) and Gln227. His438 contributes to the L-aspartate binding site. Residue Glu473 participates in ATP binding. An L-aspartate-binding site is contributed by Arg480. Residue 525 to 528 (GFDR) coordinates ATP.

It belongs to the class-II aminoacyl-tRNA synthetase family. Type 1 subfamily. In terms of assembly, homodimer.

The protein localises to the cytoplasm. The catalysed reaction is tRNA(Asp) + L-aspartate + ATP = L-aspartyl-tRNA(Asp) + AMP + diphosphate. Catalyzes the attachment of L-aspartate to tRNA(Asp) in a two-step reaction: L-aspartate is first activated by ATP to form Asp-AMP and then transferred to the acceptor end of tRNA(Asp). Is specific for tRNA(Asp) since it cannot aspartylate tRNA(Asn). The sequence is that of Aspartate--tRNA(Asp) ligase (aspS1) from Deinococcus radiodurans (strain ATCC 13939 / DSM 20539 / JCM 16871 / CCUG 27074 / LMG 4051 / NBRC 15346 / NCIMB 9279 / VKM B-1422 / R1).